The primary structure comprises 209 residues: MDGVTVIDHPLVQHKLTIMRKKETSTAGFRRLLREISTLLCYEVTRDLELTMERIETPLQEIDAPILEGKKLVFASILRAGNGLLEGMLELVPSARVSHIGVYRDHETLQPVEYYFKAPDSLNERLVIVVDPMLATGNSSIAAIDKLKERGAKNIRFLCLLAAPEGIRNFHGVHPDVPIFTASIDSHLNEKGYIVPGLGDAGDRMYGTK.

Residues Arg79, Arg104, and 131–139 (DPMLATGNS) contribute to the 5-phospho-alpha-D-ribose 1-diphosphate site. Uracil-binding positions include Ile194 and 199 to 201 (GDA). Residue Asp200 coordinates 5-phospho-alpha-D-ribose 1-diphosphate.

The protein belongs to the UPRTase family. It depends on Mg(2+) as a cofactor.

It catalyses the reaction UMP + diphosphate = 5-phospho-alpha-D-ribose 1-diphosphate + uracil. Its pathway is pyrimidine metabolism; UMP biosynthesis via salvage pathway; UMP from uracil: step 1/1. With respect to regulation, allosterically activated by GTP. In terms of biological role, catalyzes the conversion of uracil and 5-phospho-alpha-D-ribose 1-diphosphate (PRPP) to UMP and diphosphate. This is Uracil phosphoribosyltransferase from Sinorhizobium fredii (strain NBRC 101917 / NGR234).